We begin with the raw amino-acid sequence, 228 residues long: Cytidylate kinase (228 aa).

17–25 (GPSASGKGT) contributes to the ATP binding site.

Belongs to the cytidylate kinase family. Type 1 subfamily.

The protein resides in the cytoplasm. The catalysed reaction is CMP + ATP = CDP + ADP. It carries out the reaction dCMP + ATP = dCDP + ADP. The polypeptide is Cytidylate kinase (Paraburkholderia xenovorans (strain LB400)).